A 616-amino-acid polypeptide reads, in one-letter code: Angiotensin-converting enzyme (616 aa).

A signal peptide spans 1-23; sequence MNLINFSYLNLLFGAGLFSVLES. In terms of domain architecture, Peptidase M2 spans 27-610; the sequence is LNTESDAKKW…PRAENWMGGK (584 aa). Asparagine 61 and asparagine 96 each carry an N-linked (GlcNAc...) asparagine glycan. Cysteine 142 and cysteine 152 form a disulfide bridge. Residues arginine 180 and tyrosine 218 each coordinate chloride. Asparagine 303 is a glycosylation site (N-linked (GlcNAc...) asparagine). Cysteine 345 and cysteine 363 are joined by a disulfide. Histidine 376 contributes to the Zn(2+) binding site. Glutamate 377 (proton acceptor) is an active-site residue. The Zn(2+) site is built by histidine 380 and glutamate 404. Residue asparagine 428 is glycosylated (N-linked (GlcNAc...) asparagine). Positions 478 and 482 each coordinate chloride. Catalysis depends on histidine 506, which acts as the Proton donor. Arginine 515 provides a ligand contact to chloride. Cysteine 531 and cysteine 543 are joined by a disulfide. N-linked (GlcNAc...) asparagine glycans are attached at residues asparagine 535 and asparagine 573.

The protein belongs to the peptidase M2 family. Requires Zn(2+) as cofactor. It depends on chloride as a cofactor. As to expression, epithelial cells of the midgut.

The protein resides in the secreted. The protein localises to the extracellular space. It carries out the reaction Release of a C-terminal dipeptide, oligopeptide-|-Xaa-Yaa, when Xaa is not Pro, and Yaa is neither Asp nor Glu. Thus, conversion of angiotensin I to angiotensin II, with increase in vasoconstrictor activity, but no action on angiotensin II.. Its activity is regulated as follows. Activated by chloride. Inhibited by captopril and lisinopril, and to a lesser extent by delaprilat. In Theromyzon tessulatum (Duck leech), this protein is Angiotensin-converting enzyme (ACE).